The primary structure comprises 212 residues: Adenylate kinase (212 aa).

ATP is bound at residue 10-15; the sequence is GAGKGT. The interval 30–59 is NMP; that stretch reads AIGDIFRTIIKTSTSEAELINNYVKQGELI. AMP-binding positions include Arg36, 57–59, 85–88, and Gln92; these read ELI and GYPR. Residues 122 to 160 are LID; it reads GRYSCKNCGKIYNRYFVQPKTDNVCDVCGSSTFDYRKDD. Residue Arg123 participates in ATP binding. The Zn(2+) site is built by Cys126 and Cys129. An ATP-binding site is contributed by 132 to 133; sequence IY. Zn(2+) contacts are provided by Cys146 and Cys149. AMP is bound by residues Arg157 and Arg168. Lys196 is an ATP binding site.

This sequence belongs to the adenylate kinase family. In terms of assembly, monomer.

It is found in the cytoplasm. It carries out the reaction AMP + ATP = 2 ADP. It participates in purine metabolism; AMP biosynthesis via salvage pathway; AMP from ADP: step 1/1. Functionally, catalyzes the reversible transfer of the terminal phosphate group between ATP and AMP. Plays an important role in cellular energy homeostasis and in adenine nucleotide metabolism. In Rickettsia conorii (strain ATCC VR-613 / Malish 7), this protein is Adenylate kinase.